Consider the following 111-residue polypeptide: MSYPISAQPQGVQGYMTSNSSQWNSDVFDCCEDMGVCLCGTFVPCILACKVSQDFGECCCLPCLFGSILAVRTGIRERYHIEGSICKDWVCLSFCGPCALCQMARELKTRN.

Belongs to the cornifelin family.

This Xenopus laevis (African clawed frog) protein is Cornifelin homolog A (cnfn-a).